We begin with the raw amino-acid sequence, 428 residues long: 3-phosphoshikimate 1-carboxyvinyltransferase (428 aa).

The 3-phosphoshikimate site is built by Lys-21, Ser-22, and Arg-26. Residue Lys-21 participates in phosphoenolpyruvate binding. Gly-91 and Arg-119 together coordinate phosphoenolpyruvate. Positions 164, 166, 313, and 340 each coordinate 3-phosphoshikimate. Phosphoenolpyruvate is bound at residue Gln-166. The Proton acceptor role is filled by Asp-313. Arg-344 and Arg-386 together coordinate phosphoenolpyruvate.

Belongs to the EPSP synthase family. In terms of assembly, monomer.

The protein resides in the cytoplasm. The catalysed reaction is 3-phosphoshikimate + phosphoenolpyruvate = 5-O-(1-carboxyvinyl)-3-phosphoshikimate + phosphate. Its pathway is metabolic intermediate biosynthesis; chorismate biosynthesis; chorismate from D-erythrose 4-phosphate and phosphoenolpyruvate: step 6/7. Its function is as follows. Catalyzes the transfer of the enolpyruvyl moiety of phosphoenolpyruvate (PEP) to the 5-hydroxyl of shikimate-3-phosphate (S3P) to produce enolpyruvyl shikimate-3-phosphate and inorganic phosphate. The chain is 3-phosphoshikimate 1-carboxyvinyltransferase from Campylobacter jejuni subsp. jejuni serotype O:6 (strain 81116 / NCTC 11828).